Consider the following 458-residue polypeptide: MAGSPSRAAGRRLQLPLLCLFLQGATAVLFAVFVRYNHKTDAALWHRSNHSNADNEFYFRYPSFQDVHAMVFVGFGFLMVFLQRYGFSSVGFTFLLAAFALQWSTLVQGFLHSFHGGHIHVGVESMINADFCAGAVLISFGAVLGKTGPAQLLLMALLEVVLFGINEFVLLHLLGVRDAGGSMTIHTFGAYFGLVLSRVLYRPQLEKSKHRQGSVYHSDLFTMIGTIFLWIFWPSFNAALTALGAGQHRTALNTYYSLAASTLGTFALSALVGEDGRLDMVHIQNAALTGGVVVGTSSKMMLTPFGALAAGFLAGTVSTLGYKFFTPILESKFKVQDTCGVHNLHGMPGVLGALLGVLVAGLATHEAYGDGLESVFPLIAEGQRSATSQAMHQLFGLFVTLMFASVGGGLGGLLLKLPFLDSPPDSQCYEDQVHWQVPGEHEDKAQRPLRVEEADTYA.

The Cytoplasmic portion of the chain corresponds to 1–13 (MAGSPSRAAGRRL). The chain crosses the membrane as a helical span at residues 14 to 34 (QLPLLCLFLQGATAVLFAVFV). Topologically, residues 35–61 (RYNHKTDAALWHRSNHSNADNEFYFRY) are extracellular. N-linked (GlcNAc...) asparagine glycosylation occurs at Asn49. The chain crosses the membrane as a helical span at residues 62–82 (PSFQDVHAMVFVGFGFLMVFL). Residues 83 to 86 (QRYG) lie on the Cytoplasmic side of the membrane. The chain crosses the membrane as a helical span at residues 87-107 (FSSVGFTFLLAAFALQWSTLV). Over 108-124 (QGFLHSFHGGHIHVGVE) the chain is Extracellular. Residues 125-145 (SMINADFCAGAVLISFGAVLG) traverse the membrane as a helical segment. Topologically, residues 146-149 (KTGP) are cytoplasmic. Residues 150–170 (AQLLLMALLEVVLFGINEFVL) form a helical membrane-spanning segment. The Extracellular segment spans residues 171-178 (LHLLGVRD). The helical transmembrane segment at 179 to 201 (AGGSMTIHTFGAYFGLVLSRVLY) threads the bilayer. Residues 202–219 (RPQLEKSKHRQGSVYHSD) are Cytoplasmic-facing. Residues 220 to 240 (LFTMIGTIFLWIFWPSFNAAL) traverse the membrane as a helical segment. Residues 241-251 (TALGAGQHRTA) are Extracellular-facing. A helical membrane pass occupies residues 252–272 (LNTYYSLAASTLGTFALSALV). At 273–282 (GEDGRLDMVH) the chain is on the cytoplasmic side. A helical transmembrane segment spans residues 283 to 303 (IQNAALTGGVVVGTSSKMMLT). Residue Pro304 is a topological domain, extracellular. The helical transmembrane segment at 305–325 (FGALAAGFLAGTVSTLGYKFF) threads the bilayer. Over 326–346 (TPILESKFKVQDTCGVHNLHG) the chain is Cytoplasmic. The chain crosses the membrane as a helical span at residues 347 to 367 (MPGVLGALLGVLVAGLATHEA). Residues 368–393 (YGDGLESVFPLIAEGQRSATSQAMHQ) lie on the Extracellular side of the membrane. The chain crosses the membrane as a helical span at residues 394-414 (LFGLFVTLMFASVGGGLGGLL). Residues 415 to 458 (LKLPFLDSPPDSQCYEDQVHWQVPGEHEDKAQRPLRVEEADTYA) are Cytoplasmic-facing. The interval 416–424 (KLPFLDSPP) is interaction with ANK3. Residues 429–432 (YEDQ) carry the Basolateral sorting signal motif. The interval 439 to 458 (GEHEDKAQRPLRVEEADTYA) is disordered.

The protein belongs to the ammonium transporter (TC 2.A.49) family. Rh subfamily. Interacts (via C-terminus) with ANK2 and ANK3; required for targeting to the basolateral membrane. In terms of processing, N-glycosylated.

It localises to the cell membrane. Its subcellular location is the basolateral cell membrane. The enzyme catalyses NH4(+)(in) = NH4(+)(out). It carries out the reaction methylamine(out) = methylamine(in). The catalysed reaction is CO2(out) = CO2(in). In terms of biological role, ammonium transporter involved in the maintenance of acid-base homeostasis. Transports ammonium and its related derivative methylammonium across the basolateral plasma membrane of epithelial cells likely contributing to renal transepithelial ammonia transport and ammonia metabolism. May transport either NH4(+) or NH3 ammonia species predominantly mediating an electrogenic NH4(+) transport. May act as a CO2 channel providing for renal acid secretion. The protein is Ammonium transporter Rh type B (RHBG) of Gorilla gorilla gorilla (Western lowland gorilla).